Consider the following 234-residue polypeptide: Nuclear ubiquitous casein and cyclin-dependent kinase substrate 1 (234 aa).

The disordered stretch occupies residues 1–234 (MSRPVRNRKV…SEDEASSGED (234 aa)). Position 13 is a phosphotyrosine (Tyr-13). A phosphoserine mark is found at Ser-14 and Ser-19. A Phosphotyrosine modification is found at Tyr-26. Residues 35 to 51 (KKIRSSPREAKNKRRSG) show a composition bias toward basic residues. A phosphoserine mark is found at Ser-54, Ser-58, Ser-61, Ser-73, Ser-75, and Ser-79. Residues 64-77 (KDVKTKKDDSHSAE) show a composition bias toward basic and acidic residues. Positions 91-100 (QQRQAASKAA) are enriched in low complexity. Positions 111–124 (VGSEEEPEEDDEAP) are enriched in acidic residues. Residues Ser-113, Ser-130, Ser-132, and Ser-144 each carry the phosphoserine modification. A compositionally biased stretch (acidic residues) spans 132–145 (SDEDFLMEDDDDSD). Over residues 149–174 (SKKKNKKMVKKSKPERKEKKMPKPRL) the composition is skewed to basic residues. Thr-179 bears the Phosphothreonine mark. Phosphoserine is present on Ser-181. Residues 185 to 199 (GKAKVGRPTASKKSK) show a composition bias toward basic residues. Thr-202 is modified (phosphothreonine). A phosphoserine mark is found at Ser-204, Ser-214, Ser-225, and Ser-231. Positions 223 to 234 (EGSEDEASSGED) are enriched in acidic residues.

As to quaternary structure, does not interact with RAD51. In terms of processing, phosphorylated in an ATM-dependent manner in response to DNA damage. Phosphorylated by CDK1 and casein kinase.

It is found in the nucleus. Its subcellular location is the chromosome. Functionally, chromatin-associated protein involved in DNA repair by promoting homologous recombination (HR). Binds double-stranded DNA (dsDNA) and secondary DNA structures, such as D-loop structures, but with less affinity than RAD51AP1. The polypeptide is Nuclear ubiquitous casein and cyclin-dependent kinase substrate 1 (Nucks1) (Mus musculus (Mouse)).